The sequence spans 457 residues: MALWGGRFSQAADQRFKQLNDSLRFDYRLAEQDIVGSVAWSKALVTVNVLTAAEQQQLEQALNGLLAEVQADPQAIVSSDAEDIHSWVEQKLIDQVGDLGKKLHTGRSRNDQVATDLKLWCKQQIGELHQAIVQLQQALVETAEANQDAVMPGYTHLQRAQPVTFAHWCLAYVEMLARDESRLQDTLKRLDVSPLGSGALAGTAYPIDREQLAGWLGFASATRNSLDSVSDRDHVLELLSNASISMVHLSRFAEDLIFFNSGEAAFVDLSDRVTSGSSLMPQKKNPDALELIRGKCGRVQGALTGMMMTLKGLPLAYNKDMQEDKEGLFDALDTWMDCLQMAALVLDGIQVKRPRCKEAAEQGYANSTELADYLVAKGVPFREAHHIVGEAVVEAIRQGKALEALPLTDLQKFSAVIGDDVYPILALQSCLDKRSAKGGVSPQQVASAIAAAKQRLA.

This sequence belongs to the lyase 1 family. Argininosuccinate lyase subfamily.

It is found in the cytoplasm. It catalyses the reaction 2-(N(omega)-L-arginino)succinate = fumarate + L-arginine. The protein operates within amino-acid biosynthesis; L-arginine biosynthesis; L-arginine from L-ornithine and carbamoyl phosphate: step 3/3. The polypeptide is Argininosuccinate lyase (Serratia proteamaculans (strain 568)).